Reading from the N-terminus, the 165-residue chain is Chorismate pyruvate-lyase (165 aa).

Substrate is bound by residues methionine 35, arginine 77, leucine 115, and glutamate 156.

Belongs to the UbiC family. As to quaternary structure, monomer.

The protein localises to the cytoplasm. The enzyme catalyses chorismate = 4-hydroxybenzoate + pyruvate. It participates in cofactor biosynthesis; ubiquinone biosynthesis. In terms of biological role, removes the pyruvyl group from chorismate, with concomitant aromatization of the ring, to provide 4-hydroxybenzoate (4HB) for the ubiquinone pathway. The chain is Chorismate pyruvate-lyase from Escherichia coli O157:H7.